The following is a 237-amino-acid chain: tRNA (guanine-N(7)-)-methyltransferase (237 aa).

S-adenosyl-L-methionine contacts are provided by Glu68, Glu93, Asp120, and Asp143. Asp143 is a catalytic residue. Substrate is bound by residues Lys147, Asp179, and Thr216–Glu219.

It belongs to the class I-like SAM-binding methyltransferase superfamily. TrmB family.

The catalysed reaction is guanosine(46) in tRNA + S-adenosyl-L-methionine = N(7)-methylguanosine(46) in tRNA + S-adenosyl-L-homocysteine. It functions in the pathway tRNA modification; N(7)-methylguanine-tRNA biosynthesis. Catalyzes the formation of N(7)-methylguanine at position 46 (m7G46) in tRNA. The chain is tRNA (guanine-N(7)-)-methyltransferase from Shewanella pealeana (strain ATCC 700345 / ANG-SQ1).